A 602-amino-acid chain; its full sequence is Elongation factor 4 (602 aa).

The tr-type G domain occupies 6-188; sequence DHIRNFSIVA…AIVNKLPAPK (183 aa). Residues 18-23 and 135-138 contribute to the GTP site; these read DHGKST and NKID.

Belongs to the TRAFAC class translation factor GTPase superfamily. Classic translation factor GTPase family. LepA subfamily.

It is found in the cell inner membrane. The enzyme catalyses GTP + H2O = GDP + phosphate + H(+). Required for accurate and efficient protein synthesis under certain stress conditions. May act as a fidelity factor of the translation reaction, by catalyzing a one-codon backward translocation of tRNAs on improperly translocated ribosomes. Back-translocation proceeds from a post-translocation (POST) complex to a pre-translocation (PRE) complex, thus giving elongation factor G a second chance to translocate the tRNAs correctly. Binds to ribosomes in a GTP-dependent manner. The sequence is that of Elongation factor 4 from Brucella abortus (strain 2308).